Reading from the N-terminus, the 380-residue chain is MRIVADENIPLLDAFFAHFGEIHRLPGRAIDRAAVANADILLVRSVTPVTRELLEGSPVRFVGTCTIGTDHLDLDGFQQAGIQWASAPGCNARGVVDYVLGSLLTLAEIEGVDLAQRTYGVVGAGQVGGRLVDVLKALGWNVLVCDPPRKSAEGGDFVSLDEILQRCDVISLHTPLSKAGASATWHLLDETRLRQLRQGAWLINASRGAVVDNTALHDVLHEREDLQAVLDVWEGEPQVNVALADLCVLGTPHIAGYSLDGRQRGTAQIYQALCAFLGQPAVIKLDDLLPKPWLAQVSLDASSDPVWALNMLCRGVYDPRRDDADFRRSLTGDTASQRLAFDALRKHYPPRREIEGLKVRLEGESGGLAQLVRALGAVLV.

Positions 45 and 66 each coordinate substrate. NAD(+) is bound by residues 126-127, D146, T174, 205-207, and D231; these read QV and ASR. R207 is a catalytic residue. The active site involves E236. The active-site Proton donor is H253. Position 256 (G256) interacts with NAD(+). Y257 contacts substrate.

The protein belongs to the D-isomer specific 2-hydroxyacid dehydrogenase family. PdxB subfamily. As to quaternary structure, homodimer.

Its subcellular location is the cytoplasm. The enzyme catalyses 4-phospho-D-erythronate + NAD(+) = (R)-3-hydroxy-2-oxo-4-phosphooxybutanoate + NADH + H(+). Its pathway is cofactor biosynthesis; pyridoxine 5'-phosphate biosynthesis; pyridoxine 5'-phosphate from D-erythrose 4-phosphate: step 2/5. Functionally, catalyzes the oxidation of erythronate-4-phosphate to 3-hydroxy-2-oxo-4-phosphonooxybutanoate. This Pseudomonas savastanoi pv. phaseolicola (strain 1448A / Race 6) (Pseudomonas syringae pv. phaseolicola (strain 1448A / Race 6)) protein is Erythronate-4-phosphate dehydrogenase.